The chain runs to 87 residues: Putative defensin-like protein 84 (87 aa).

An N-terminal signal peptide occupies residues 1–27 (MTTKMVSSHRLLTLMVFALLLIPMISG). 4 disulfides stabilise this stretch: Cys-32-Cys-73, Cys-36-Cys-54, Cys-42-Cys-71, and Cys-46-Cys-72.

It belongs to the DEFL family.

The protein localises to the secreted. The chain is Putative defensin-like protein 84 from Arabidopsis thaliana (Mouse-ear cress).